The primary structure comprises 207 residues: Ribosomal RNA small subunit methyltransferase G (207 aa).

Residues glycine 73, leucine 78, valine 124–glutamate 125, and arginine 139 contribute to the S-adenosyl-L-methionine site.

The protein belongs to the methyltransferase superfamily. RNA methyltransferase RsmG family.

Its subcellular location is the cytoplasm. It catalyses the reaction guanosine(527) in 16S rRNA + S-adenosyl-L-methionine = N(7)-methylguanosine(527) in 16S rRNA + S-adenosyl-L-homocysteine. In terms of biological role, specifically methylates the N7 position of guanine in position 527 of 16S rRNA. The polypeptide is Ribosomal RNA small subunit methyltransferase G (Klebsiella pneumoniae subsp. pneumoniae (strain ATCC 700721 / MGH 78578)).